The sequence spans 533 residues: 2-isopropylmalate synthase (533 aa).

In terms of domain architecture, Pyruvate carboxyltransferase spans 8 to 269 (ILIFDTTLRD…YFNPFLGRPA (262 aa)). 4 residues coordinate Mn(2+): Asp-17, His-208, His-210, and Asn-244. The tract at residues 408–533 (RLERVQVSCG…REHPPVVASL (126 aa)) is regulatory domain.

The protein belongs to the alpha-IPM synthase/homocitrate synthase family. LeuA type 1 subfamily. As to quaternary structure, homodimer. Mn(2+) is required as a cofactor.

It localises to the cytoplasm. It catalyses the reaction 3-methyl-2-oxobutanoate + acetyl-CoA + H2O = (2S)-2-isopropylmalate + CoA + H(+). Its pathway is amino-acid biosynthesis; L-leucine biosynthesis; L-leucine from 3-methyl-2-oxobutanoate: step 1/4. Its function is as follows. Catalyzes the condensation of the acetyl group of acetyl-CoA with 3-methyl-2-oxobutanoate (2-ketoisovalerate) to form 3-carboxy-3-hydroxy-4-methylpentanoate (2-isopropylmalate). The sequence is that of 2-isopropylmalate synthase from Synechocystis sp. (strain ATCC 27184 / PCC 6803 / Kazusa).